The sequence spans 204 residues: Probable GTP-binding protein EngB (204 aa).

The EngB-type G domain maps to 27-201; that stretch reads SGIEIAFAGR…SEKLDQWFSP (175 aa). GTP-binding positions include 35–42, 62–66, 80–83, 147–150, and 180–182; these read GRSNAGKS, GRTQL, DLPG, TKAD, and FSA. 2 residues coordinate Mg(2+): serine 42 and threonine 64.

This sequence belongs to the TRAFAC class TrmE-Era-EngA-EngB-Septin-like GTPase superfamily. EngB GTPase family. It depends on Mg(2+) as a cofactor.

Functionally, necessary for normal cell division and for the maintenance of normal septation. This chain is Probable GTP-binding protein EngB, found in Histophilus somni (strain 129Pt) (Haemophilus somnus).